We begin with the raw amino-acid sequence, 409 residues long: Accessory Sec system protein translocase subunit SecY2 (409 aa).

The next 10 helical transmembrane spans lie at 16 to 36 (ILITFSLIIIFLLGRYVPIPG), 61 to 81 (LSQVGVFSLGIGPMMTTMILL), 104 to 124 (VVMLVIAIIQGLAIAISFQYH), 132 to 152 (LLLATMILVTGAYIISWIGNL), 161 to 181 (MTILVVVGMLVGQFNNIPLIF), 190 to 210 (LAIILFLLWTLVAMYLMITFE), 242 to 262 (GMAFMYVYTLLMFPQYIIILL), 286 to 306 (GVVIYMILMLVLSVAFTFVNI), 341 to 361 (LFGTFSGFFMAFLGGVPLLFA), and 374 to 394 (TGIFMMITGMSFMILDEFQVI).

Belongs to the SecY/SEC61-alpha family. SecY2 subfamily. As to quaternary structure, component of the accessory SecA2/SecY2 protein translocase complex required to export cell wall proteins. May form heterotrimers with SecE and SecG subunits.

It localises to the cell membrane. Its function is as follows. Part of the accessory SecA2/SecY2 system specifically required for export of possible cell wall proteins. The central subunit of a protein translocation channel. The protein is Accessory Sec system protein translocase subunit SecY2 of Streptococcus agalactiae serotype III (strain NEM316).